A 434-amino-acid chain; its full sequence is ATP-dependent RNA helicase uap56 (434 aa).

The disordered stretch occupies residues 1-43; sequence MASAQEDLIDYEEEEELVQDQPAQEITPAADTAENGEKSDKKG. Acidic residues predominate over residues 7–18; sequence DLIDYEEEEELV. The Q motif motif lies at 51–79; it reads TGFRDFLLKPELLRAITDSGFEHPSEVQQ. The 176-residue stretch at 82 to 257 folds into the Helicase ATP-binding domain; the sequence is IPQSILGTDV…KKFMQNPLEI (176 aa). Position 95 to 102 (95 to 102) interacts with ATP; sequence AKSGMGKT. Positions 204–207 match the DECD box motif; that stretch reads DECD. In terms of domain architecture, Helicase C-terminal spans 269–430; it reads GLQQHYVKLE…ELPDEIDVGS (162 aa).

This sequence belongs to the DEAD box helicase family. DECD subfamily. In terms of assembly, interacts with mlo3 and rae1.

The protein resides in the nucleus. The enzyme catalyses ATP + H2O = ADP + phosphate + H(+). Functionally, ATP-binding RNA helicase involved in transcription elongation and required for the export of mRNA out of the nucleus. SUB2 also plays a role in pre-mRNA splicing and spliceosome assembly. May be involved in rDNA and telomeric silencing, and maintenance of genome integrity. Links the mRNA adapter mlo3 to rae1 for targeting mRNA-protein complex to the proteins of the nucleoporin complex (NPC). This is ATP-dependent RNA helicase uap56 (uap56) from Schizosaccharomyces pombe (strain 972 / ATCC 24843) (Fission yeast).